A 578-amino-acid polypeptide reads, in one-letter code: Proline--tRNA ligase (578 aa).

It belongs to the class-II aminoacyl-tRNA synthetase family. ProS type 1 subfamily. In terms of assembly, homodimer.

The protein localises to the cytoplasm. It catalyses the reaction tRNA(Pro) + L-proline + ATP = L-prolyl-tRNA(Pro) + AMP + diphosphate. Its function is as follows. Catalyzes the attachment of proline to tRNA(Pro) in a two-step reaction: proline is first activated by ATP to form Pro-AMP and then transferred to the acceptor end of tRNA(Pro). As ProRS can inadvertently accommodate and process non-cognate amino acids such as alanine and cysteine, to avoid such errors it has two additional distinct editing activities against alanine. One activity is designated as 'pretransfer' editing and involves the tRNA(Pro)-independent hydrolysis of activated Ala-AMP. The other activity is designated 'posttransfer' editing and involves deacylation of mischarged Ala-tRNA(Pro). The misacylated Cys-tRNA(Pro) is not edited by ProRS. In Burkholderia mallei (strain ATCC 23344), this protein is Proline--tRNA ligase.